Here is a 69-residue protein sequence, read N- to C-terminus: Fumarase D (69 aa).

It belongs to the FumD family.

The catalysed reaction is (S)-malate = fumarate + H2O. Its function is as follows. In vitro catalyzes the addition of water to fumarate, forming malate. Cannot catalyze the reverse reaction. Cannot use the cis-isomer maleate as substrate. The chain is Fumarase D from Shigella flexneri.